Consider the following 540-residue polypeptide: BTB/POZ domain-containing protein 6-A (540 aa).

Positions 138 to 208 (ADVHFIVGPP…MYSDEIELAP (71 aa)) constitute a BTB domain.

In terms of assembly, interacts with cul3. Interacts (via BTB domain) with zbtb16/plzf. In terms of tissue distribution, expressed in the developing central nervous system.

Its subcellular location is the cytoplasm. It is found in the nucleus. Adapter protein for the cul3 E3 ubiquitin-protein ligase complex. Promotes the export of zbtb16/plzf from the nucleus to the cytoplasm and targets zbtb16/plzf for ubiquitination and degradation. Up-regulates neurog1 expression and antagonizes zbtb16/plzf, to promote neurogenesis. In Danio rerio (Zebrafish), this protein is BTB/POZ domain-containing protein 6-A (btbd6a).